Consider the following 501-residue polypeptide: Probable malate:quinone oxidoreductase (501 aa).

The protein belongs to the MQO family. The cofactor is FAD.

The enzyme catalyses (S)-malate + a quinone = a quinol + oxaloacetate. It participates in carbohydrate metabolism; tricarboxylic acid cycle; oxaloacetate from (S)-malate (quinone route): step 1/1. In Mycolicibacterium paratuberculosis (strain ATCC BAA-968 / K-10) (Mycobacterium paratuberculosis), this protein is Probable malate:quinone oxidoreductase.